A 498-amino-acid chain; its full sequence is ATP synthase subunit beta, chloroplastic (498 aa).

172 to 179 serves as a coordination point for ATP; that stretch reads GGAGVGKT.

This sequence belongs to the ATPase alpha/beta chains family. As to quaternary structure, F-type ATPases have 2 components, CF(1) - the catalytic core - and CF(0) - the membrane proton channel. CF(1) has five subunits: alpha(3), beta(3), gamma(1), delta(1), epsilon(1). CF(0) has four main subunits: a(1), b(1), b'(1) and c(9-12).

Its subcellular location is the plastid. It is found in the chloroplast thylakoid membrane. The enzyme catalyses ATP + H2O + 4 H(+)(in) = ADP + phosphate + 5 H(+)(out). Its function is as follows. Produces ATP from ADP in the presence of a proton gradient across the membrane. The catalytic sites are hosted primarily by the beta subunits. This Panax ginseng (Korean ginseng) protein is ATP synthase subunit beta, chloroplastic.